The primary structure comprises 280 residues: Probable cell division protein WhiA (280 aa).

A DNA-binding region (H-T-H motif) is located at residues 246 to 279 (SLEQIAQFFERKYKVQITRSGIQHLNAKLKKLNQ).

It belongs to the WhiA family.

Its function is as follows. Involved in cell division and chromosome segregation. The protein is Probable cell division protein WhiA of Mycoplasma pneumoniae (strain ATCC 29342 / M129 / Subtype 1) (Mycoplasmoides pneumoniae).